The following is a 989-amino-acid chain: Atos homolog protein A (989 aa).

The transactivation domain 1 (TAD1) stretch occupies residues 24–32; sequence TLLITEGRT. Disordered stretches follow at residues 244–295, 393–477, 525–639, and 656–686; these read GEGG…LPPG, PDAL…KPAT, QNEQ…GLTQ, and EAEK…TPAN. Residues 254-270 show a composition bias toward low complexity; sequence RSSLRLPRSPLFSRSLH. Polar residues predominate over residues 397-412; the sequence is FTSQEPPGHKTTWNST. Composition is skewed to basic and acidic residues over residues 413 to 423 and 460 to 471; these read QDKECLKKSKD and TRLDRVDRESKT. Composition is skewed to polar residues over residues 525-544 and 600-638; these read QNEQ…VSLS and TKSQ…NGLT. Over residues 656–675 the composition is skewed to basic and acidic residues; sequence EAEKHVRDGSTCLEKDENQE. Positions 676–686 are enriched in polar residues; it reads PHSSLSSTPAN. The interval 792–849 is required for macropage invasion; it reads LLGNFEECVLNYRLEPLGTVEGFTAEVGASGTFCPSHMTLPVDVSFYSVSDDNAPSPY. Positions 876 to 884 are transactivation domain 2 (TAD2); that stretch reads FNPNKTVVK.

The protein belongs to the ATOS family.

It localises to the nucleus. Functionally, transcription regulator that syncronizes transcriptional and translational programs to promote macrophage invasion of tissues. This is Atos homolog protein A (atosa) from Danio rerio (Zebrafish).